A 1002-amino-acid chain; its full sequence is MVVRYSLLMKVSFAILIFLVGCNENATSSNDQYLTDPDISEQTKKPSRPIIDEKNKGVTDTSVTIEWDKIECEKNFSHYNVIVYRKDRIEDVITIRTRNNSVFIDDLKPNSQYSIDVSSCLHSACSESAKIEFITLNEIDYYHTTEIEKNVYGSLEGEVRFVQTHVISPEGRKNEPEIITGRDALILFKPSIKNSSSILMKIYSEDGLTSKVVMKSPSMLPKTDQPIDIDENNKVVSYSNSYWSAEIPWNKMKSGMSLHFEDENGNLGIIESERIKFSAPSELIIQNIDLGMLYKPRGRNIVIKELERTAVDYFQKVPVSKLIFSDYTPIHFEKITLPNGSVYTEKSADIGGWHQGDMREAVGKALVSTGINNANLGIVASSGYSQQYNRLTNHITAHTNIGYYNNGVVVHGGSGGGGIVTLENTLHNEWSHELGHNYGLGHYVAGGTSHGPDTSWGWDGYYKRFIANFDWKRSPQSNIRPDNQEVVKPFMDKYTYLWDAMSGGYDHQNGIISRYTLHHPYVARIIQDWLKNGAVVINNDYMVWDELKNIYVYKGTNFKVPIKKGVPVVTILGVYDPDKINPSQLYPPTYSNYGNIFDLEKPRSESSLKGWQYVKDVNYLDRVNTHWHTMLVNRKEEKICRFSYLSPKGKKFEFLGYEDIENKICTGSRSIHYLEDGKKNPIESKYNDYFLLSIDGDGEISYVPDSTIGESKICSLKMSGTVYGAGFIKGNSCRQIDGVFMNGFQWAFTLNQSGVNSTYTWSNECVLKIKDKDNNIESISIPNYRIEKNQSNKIHLNISREKPIIDINVYCGEHELTSIKVSDNPDIKLLKGPIIVGQEHGYTSYEPKLPSGWFKHYDNFEPKNEINHELGKMRVNDNDEYICRFNFSDSDREMKFVGYVSQLSESKYICTGGSEIYYKKNDINIELSSKENDFEWLSVRDKNLIGSKIEFDNNKTLCVLDNRSFYGAGYLDENNRCTQDRQIHWSNGKQWLFSTYKTMTYH.

An N-terminal signal peptide occupies residues 1–21 (MVVRYSLLMKVSFAILIFLVG). Cysteine 22 carries N-palmitoyl cysteine lipidation. Cysteine 22 is lipidated: S-diacylglycerol cysteine. Positions 31–53 (DQYLTDPDISEQTKKPSRPIIDE) are disordered. The Fibronectin type-III domain maps to 45 to 139 (KPSRPIIDEK…KIEFITLNEI (95 aa)). Residues 282-536 (ELIIQNIDLG…QDWLKNGAVV (255 aa)) enclose the Peptidase M66 domain. Histidine 432 serves as a coordination point for Zn(2+). Residue glutamate 433 is part of the active site. Zn(2+) contacts are provided by histidine 436 and histidine 442.

It depends on Zn(2+) as a cofactor.

Its subcellular location is the cell membrane. The polypeptide is ToxR-activated gene A lipoprotein (tagA) (Vibrio cholerae serotype O1 (strain ATCC 39541 / Classical Ogawa 395 / O395)).